Consider the following 176-residue polypeptide: Sigma intracellular receptor 2 (176 aa).

Over 1–9 (MGALAARRC) the chain is Cytoplasmic. Residues 10-30 (VEWLLGLYFVSHIPITLFIDL) form a helical membrane-spanning segment. An EXPERA domain is found at 10–158 (VEWLLGLYFV…PYLIIPLILL (149 aa)). Residues 31–68 (QAVLPPELYPQEFSNLLRWYSKEFKDPLMQEPPVWFKS) are Lumenal-facing. Residues 69-89 (FLLCELVFQLPFFPIAAYAFF) traverse the membrane as a helical segment. Residues V75 and Q77 each coordinate cholesterol. The Cytoplasmic portion of the chain corresponds to 90-99 (KGSCRWIRIP). A helical transmembrane segment spans residues 100–120 (AIIYAAHTITTLIPILYTLLF). Over 121 to 140 (EDFSKAVAFKGQRPESFRER) the chain is Lumenal. Residues 141 to 161 (LTLVGVYAPYLIIPLILLLFM) form a helical membrane-spanning segment. Topologically, residues 162 to 176 (LRNPYYKYEEKRKKK) are cytoplasmic. The ER retention motif motif lies at 172 to 176 (KRKKK).

It belongs to the TMEM97/sigma-2 receptor family. In terms of assembly, homodimer. Interacts with NPC1; the interaction impairs NPC1-mediated cholesterol transport. Interacts with PGRMC1 and LDLR; the interaction increases LDL internalization. Interacts with histatin 1/HTN1; the interaction induces HTN1-stimulating wound healing. Interacts with TSPO.

Its subcellular location is the rough endoplasmic reticulum membrane. It localises to the nucleus membrane. In terms of biological role, sigma-2 receptor which contributes to ameliorate dysfunctional cellular processes and slow degenerative progression by regulating cell functions including cholesterol biosynthesis/trafficking, membrane trafficking, autophagy, lipid membrane-bound protein trafficking, and receptor stabilization at the cell surface. Forms a ternary complex with PGRMC1 receptor and low density lipoprotein receptor/LDLR at the plasma membrane, which increases LDLR-mediated LDL cholesterol internalization. Decreases lysosomal sterol transporter NPC1 availability to the cell, probably through NPC1-binding, hence controlling lipid transport, including cholesterol and LBPA, outside of late endosome/lysosome. Binds regio- and stereoselective ligand 20(S)-hydroxycholesterol (20(S)-OHC) which enhances TMEM97-NPC1 interaction and decreases TMEM97-PGRMC1 and TMEM97-TSPO interactions, thereby linking OHC binding to cholesterol homeostasis. Also able to bind cholesterol. Binds histatin 1 (Hst 1)/HN1 salivary peptide at the ER membrane, which is critical for increasing mitochondria-ER contacts and stimulating Hst1 wound healing properties. May alter the activity of some cytochrome P450 proteins. Although shows homologies with sterol isomerases (EXPERA domain), not able to catalyze sterol isomerization. However, may act as sensors of these molecules. Acts as a quality control factor in the ER, promoting the proteolytic degradation of nonproductive and extramitochondrial precursor proteins in the ER membrane thus removing them from the ER surface. The polypeptide is Sigma intracellular receptor 2 (Mus musculus (Mouse)).